The sequence spans 275 residues: MSGKAHVTDGDHGPALTEGVTTALNWLSVLPIRGATTFDRITGARVMASLPVVGVVFGVLTAVLLGLLGVLGVTPLLTAVLVVIMWELLNRMMHLDGLADVADALGSYAAPERAREILADPHTGLMGFSAVLFSLLVQVTAVAALVEGKAGWLVCFIPALSRLGGQIMARVGRTPLSPTGFGAMVVGTVRLWWVAAWLVALGVTAGGVAVWAAGPAVVWIVPAAGIIACVVSESAGRHVSRRFGGVNGDCIGAGIHLSAAVVAVFCAVAVAGMTG.

The next 6 helical transmembrane spans lie at 52-72 (VVGVVFGVLTAVLLGLLGVLG), 73-93 (VTPLLTAVLVVIMWELLNRMM), 126-146 (MGFSAVLFSLLVQVTAVAALV), 181-201 (FGAMVVGTVRLWWVAAWLVAL), 208-228 (VAVWAAGPAVVWIVPAAGIIA), and 251-271 (IGAGIHLSAAVVAVFCAVAVA).

This sequence belongs to the CobS family. The cofactor is Mg(2+).

Its subcellular location is the cell membrane. The enzyme catalyses alpha-ribazole + adenosylcob(III)inamide-GDP = adenosylcob(III)alamin + GMP + H(+). It catalyses the reaction alpha-ribazole 5'-phosphate + adenosylcob(III)inamide-GDP = adenosylcob(III)alamin 5'-phosphate + GMP + H(+). It participates in cofactor biosynthesis; adenosylcobalamin biosynthesis; adenosylcobalamin from cob(II)yrinate a,c-diamide: step 7/7. Its function is as follows. Joins adenosylcobinamide-GDP and alpha-ribazole to generate adenosylcobalamin (Ado-cobalamin). Also synthesizes adenosylcobalamin 5'-phosphate from adenosylcobinamide-GDP and alpha-ribazole 5'-phosphate. In Corynebacterium efficiens (strain DSM 44549 / YS-314 / AJ 12310 / JCM 11189 / NBRC 100395), this protein is Adenosylcobinamide-GDP ribazoletransferase.